A 348-amino-acid chain; its full sequence is Small ribosomal subunit protein mS45 (348 aa).

Positions 37–57 (SCSSSSPQSSQPTTHQQQCSS) are enriched in low complexity. The disordered stretch occupies residues 37–63 (SCSSSSPQSSQPTTHQQQCSSFSTTAP).

The protein belongs to the mitochondrion-specific ribosomal protein mS45 family. In terms of assembly, component of the mitochondrial small ribosomal subunit (mt-SSU). Mature N.crassa 74S mitochondrial ribosomes consist of a small (37S) and a large (54S) subunit. The 37S small subunit contains a 16S ribosomal RNA (16S mt-rRNA) and 32 different proteins. The 54S large subunit contains a 23S rRNA (23S mt-rRNA) and 42 different proteins.

It is found in the mitochondrion. Component of the mitochondrial ribosome (mitoribosome), a dedicated translation machinery responsible for the synthesis of mitochondrial genome-encoded proteins, including at least some of the essential transmembrane subunits of the mitochondrial respiratory chain. The mitoribosomes are attached to the mitochondrial inner membrane and translation products are cotranslationally integrated into the membrane. The sequence is that of Small ribosomal subunit protein mS45 (mrps35) from Neurospora crassa (strain ATCC 24698 / 74-OR23-1A / CBS 708.71 / DSM 1257 / FGSC 987).